The chain runs to 805 residues: Cell division cycle 5-related protein (805 aa).

HTH myb-type domains lie at 1–58 (MPRI…DPSI) and 59–108 (KKTE…DQAQ). 2 DNA-binding regions (H-T-H motif) span residues 31–54 (WSRI…YEWL) and 82–104 (WRTI…EYLL). The span at 108-127 (QAKEGDKDEGDDPRKLRPGE) shows a compositional bias: basic and acidic residues. 4 disordered regions span residues 108 to 143 (QAKE…DPID), 246 to 293 (HLEG…HVKK), 409 to 442 (LSTP…QRSV), and 530 to 556 (LERR…VLRP). Residues 142–193 (IDMDEDELEMLSEARARLANTQGKKAKRKAREKQLEEARRLAALQKRRELRA) are a coiled coil. The segment covering 246-274 (HLEGKMRDEIEQQERKKDKERMKKKKESD) has biased composition (basic and acidic residues). Coiled coils occupy residues 511 to 542 (EDAA…VQRE) and 678 to 804 (YTRA…SKLQ).

It belongs to the CEF1 family. In terms of assembly, component of the precatalytic, catalytic and postcatalytic spliceosome complexes.

Its subcellular location is the nucleus. It localises to the cytoplasm. Functionally, DNA-binding protein involved in cell cycle control. May act as a transcription activator. Plays a role in pre-mRNA splicing as core component of precatalytic, catalytic and postcatalytic spliceosomal complexes. May also play a role in the response to DNA damage (DDR). This Nematostella vectensis (Starlet sea anemone) protein is Cell division cycle 5-related protein (cdc5l).